The following is a 258-amino-acid chain: Hydroxypyruvate isomerase (258 aa).

Residues E143 and E240 each act as proton donor/acceptor in the active site.

Belongs to the hyi family. Homodimer.

The catalysed reaction is 3-hydroxypyruvate = 2-hydroxy-3-oxopropanoate. Its activity is regulated as follows. Not stimulated by addition of pyridoxal 5'-phosphate (0.1 mM), FAD, NAD(+), NADP(+) or ATP (1 mM each). EDTA (10 mM) and metal ions (1 mM) such as Ca(2+), Co(2+), Mg(2+), Ni(2+), Zn(2+) do not affect the enzyme activity. In terms of biological role, catalyzes the reversible isomerization between hydroxypyruvate and 2-hydroxy-3-oxopropanoate (also termed tartronate semialdehyde). Does not catalyze the isomerization of D-fructose to D-glucose or that of D-xylulose to D-xylose. Also does not catalyze racemization of serine, alanine, glycerate or lactate. This Escherichia coli (strain K12) protein is Hydroxypyruvate isomerase (hyi).